The chain runs to 156 residues: Small ribosomal subunit protein uS7 (156 aa).

This sequence belongs to the universal ribosomal protein uS7 family. In terms of assembly, part of the 30S ribosomal subunit. Contacts proteins S9 and S11.

One of the primary rRNA binding proteins, it binds directly to 16S rRNA where it nucleates assembly of the head domain of the 30S subunit. Is located at the subunit interface close to the decoding center, probably blocks exit of the E-site tRNA. The sequence is that of Small ribosomal subunit protein uS7 from Photobacterium profundum (strain SS9).